Reading from the N-terminus, the 901-residue chain is HTH-type transcriptional regulator MalT (901 aa).

ATP is bound at residue 39-46 (SPAGYGKT). An HTH luxR-type domain is found at 829–894 (ELIRTSPLTQ…DAVQHAQQLL (66 aa)). The segment at residues 853–872 (NEQIAGELDVAATTIKTHIR) is a DNA-binding region (H-T-H motif).

It belongs to the MalT family. As to quaternary structure, monomer in solution. Oligomerizes to an active state in the presence of the positive effectors ATP and maltotriose.

Its activity is regulated as follows. Activated by ATP and maltotriose, which are both required for DNA binding. Positively regulates the transcription of the maltose regulon whose gene products are responsible for uptake and catabolism of malto-oligosaccharides. Specifically binds to the promoter region of its target genes, recognizing a short DNA motif called the MalT box. The chain is HTH-type transcriptional regulator MalT from Klebsiella pneumoniae subsp. pneumoniae (strain ATCC 700721 / MGH 78578).